A 326-amino-acid chain; its full sequence is o-succinylbenzoate synthase (326 aa).

Residue Lys-110 is the Proton donor of the active site. Mg(2+) contacts are provided by Asp-138, Glu-165, and Asp-188. The active-site Proton acceptor is Lys-212.

It belongs to the mandelate racemase/muconate lactonizing enzyme family. MenC type 1 subfamily. A divalent metal cation serves as cofactor.

The catalysed reaction is (1R,6R)-6-hydroxy-2-succinyl-cyclohexa-2,4-diene-1-carboxylate = 2-succinylbenzoate + H2O. Its pathway is quinol/quinone metabolism; 1,4-dihydroxy-2-naphthoate biosynthesis; 1,4-dihydroxy-2-naphthoate from chorismate: step 4/7. It functions in the pathway quinol/quinone metabolism; menaquinone biosynthesis. Its function is as follows. Converts 2-succinyl-6-hydroxy-2,4-cyclohexadiene-1-carboxylate (SHCHC) to 2-succinylbenzoate (OSB). This is o-succinylbenzoate synthase from Mycobacterium bovis (strain ATCC BAA-935 / AF2122/97).